The primary structure comprises 546 residues: Probable protein kinase UbiB (546 aa).

The region spanning Asp124–Leu502 is the Protein kinase domain. ATP contacts are provided by residues Leu130–Val138 and Lys153. Asp288 acts as the Proton acceptor in catalysis. The next 2 helical transmembrane spans lie at Tyr501–Pro521 and Glu522–Trp542.

It belongs to the ABC1 family. UbiB subfamily.

The protein resides in the cell inner membrane. It functions in the pathway cofactor biosynthesis; ubiquinone biosynthesis [regulation]. Functionally, is probably a protein kinase regulator of UbiI activity which is involved in aerobic coenzyme Q (ubiquinone) biosynthesis. The polypeptide is Probable protein kinase UbiB (Escherichia fergusonii (strain ATCC 35469 / DSM 13698 / CCUG 18766 / IAM 14443 / JCM 21226 / LMG 7866 / NBRC 102419 / NCTC 12128 / CDC 0568-73)).